Here is a 59-residue protein sequence, read N- to C-terminus: Ferredoxin (59 aa).

4Fe-4S ferredoxin-type domains are found at residues 2–30 (GKITIVNIDDCVACGACSGTCPQSVLEVN) and 31–59 (DHVEIKNPDDCIGCGACVDACPQGVLKVE). 8 residues coordinate [4Fe-4S] cluster: Cys-12, Cys-15, Cys-18, Cys-22, Cys-41, Cys-44, Cys-47, and Cys-51.

It depends on [4Fe-4S] cluster as a cofactor.

Ferredoxins are iron-sulfur proteins that transfer electrons in a wide variety of metabolic reactions. The sequence is that of Ferredoxin from Entamoeba histolytica (strain ATCC 30459 / HM-1:IMSS / ABRM).